The chain runs to 346 residues: FAS-associated factor 2 (346 aa).

Residue Lys-68 is modified to N6-acetyllysine. Residues 176–251 (SERLEREERN…EEKERKLECL (76 aa)) adopt a coiled-coil conformation. The interval 200-262 (ASLRADQEKE…PEPSPDDPDS (63 aa)) is disordered. Over residues 204 to 249 (ADQEKERKKREERERKRRKEEEVQQQKLAEERRRQNLQEEKERKLE) the composition is skewed to basic and acidic residues. Residues 258–340 (DDPDSVKIIF…GLSHTEVLFV (83 aa)) enclose the UBX domain.

In terms of assembly, identified in a complex that contains SEL1L, OS9, FAF2/UBXD8, UBE2J1/UBC6E and AUP1. Interacts with YOD1. Interacts (via N-terminus) with UBQLN2 (via C-terminus). Interacts with PNPLA2 and UBAC2. Interacts with ZFAND2B; probably through VCP. Interacts with LMBR1L.

The protein localises to the cytoplasm. It localises to the lipid droplet. It is found in the endoplasmic reticulum. Plays an important role in endoplasmic reticulum-associated degradation (ERAD) that mediates ubiquitin-dependent degradation of misfolded endoplasmic reticulum proteins. By controlling the steady-state expression of the IGF1R receptor, indirectly regulates the insulin-like growth factor receptor signaling pathway. Involved in inhibition of lipid droplet degradation by binding to phospholipase PNPL2 and inhibiting its activity by promoting dissociation of PNPL2 from its endogenous activator, ABHD5 which inhibits the rate of triacylglycerol hydrolysis. Involved in stress granule disassembly: associates with ubiquitinated G3BP1 in response to heat shock, thereby promoting interaction between ubiquitinated G3BP1 and VCP, followed by G3BP1 extraction from stress granules and stress granule disassembly. The polypeptide is FAS-associated factor 2 (Faf2) (Rattus norvegicus (Rat)).